We begin with the raw amino-acid sequence, 247 residues long: Ubiquinone biosynthesis O-methyltransferase (247 aa).

R40, G71, D92, and M135 together coordinate S-adenosyl-L-methionine.

The protein belongs to the methyltransferase superfamily. UbiG/COQ3 family.

The enzyme catalyses a 3-demethylubiquinol + S-adenosyl-L-methionine = a ubiquinol + S-adenosyl-L-homocysteine + H(+). It catalyses the reaction a 3-(all-trans-polyprenyl)benzene-1,2-diol + S-adenosyl-L-methionine = a 2-methoxy-6-(all-trans-polyprenyl)phenol + S-adenosyl-L-homocysteine + H(+). It functions in the pathway cofactor biosynthesis; ubiquinone biosynthesis. Its function is as follows. O-methyltransferase that catalyzes the 2 O-methylation steps in the ubiquinone biosynthetic pathway. The sequence is that of Ubiquinone biosynthesis O-methyltransferase from Ruegeria sp. (strain TM1040) (Silicibacter sp.).